A 99-amino-acid polypeptide reads, in one-letter code: Malonate decarboxylase acyl carrier protein (99 aa).

The residue at position 25 (Ser-25) is an O-(phosphoribosyl dephospho-coenzyme A)serine.

It belongs to the MdcC family. In terms of processing, covalently binds the prosthetic group of malonate decarboxylase.

Its subcellular location is the cytoplasm. Its function is as follows. Subunit of malonate decarboxylase, it is an acyl carrier protein to which acetyl and malonyl thioester residues are bound via a 2'-(5''-phosphoribosyl)-3'-dephospho-CoA prosthetic group and turn over during the catalytic mechanism. In Azotobacter vinelandii (strain DJ / ATCC BAA-1303), this protein is Malonate decarboxylase acyl carrier protein.